The sequence spans 244 residues: 7-cyano-7-deazaguanine synthase (244 aa).

14 to 24 (FSGGQDSATCV) is a binding site for ATP. Residues C202, C217, C220, and C223 each contribute to the Zn(2+) site.

The protein belongs to the QueC family. Requires Zn(2+) as cofactor.

The catalysed reaction is 7-carboxy-7-deazaguanine + NH4(+) + ATP = 7-cyano-7-deazaguanine + ADP + phosphate + H2O + H(+). The protein operates within purine metabolism; 7-cyano-7-deazaguanine biosynthesis. Functionally, catalyzes the ATP-dependent conversion of 7-carboxy-7-deazaguanine (CDG) to 7-cyano-7-deazaguanine (preQ(0)). The chain is 7-cyano-7-deazaguanine synthase from Burkholderia ambifaria (strain MC40-6).